Consider the following 318-residue polypeptide: NADH-ubiquinone oxidoreductase chain 1 (318 aa).

8 helical membrane passes run 2-22 (FLIN…FLTL), 69-89 (FLFT…WAPL), 102-122 (LLFI…SGWA), 146-166 (MTTI…TAFA), 171-191 (HLWL…STLA), 222-242 (LFFM…VILF), 253-273 (EIST…FLWV), and 294-314 (LPLT…LACI).

Belongs to the complex I subunit 1 family.

The protein localises to the mitochondrion inner membrane. The catalysed reaction is a ubiquinone + NADH + 5 H(+)(in) = a ubiquinol + NAD(+) + 4 H(+)(out). Core subunit of the mitochondrial membrane respiratory chain NADH dehydrogenase (Complex I) that is believed to belong to the minimal assembly required for catalysis. Complex I functions in the transfer of electrons from NADH to the respiratory chain. The immediate electron acceptor for the enzyme is believed to be ubiquinone. The protein is NADH-ubiquinone oxidoreductase chain 1 (MT-ND1) of Loxodonta africana (African elephant).